The primary structure comprises 138 residues: Large ribosomal subunit protein uL16 (138 aa).

Basic residues predominate over residues 1 to 16 (MLIPRRVKHRKQHHPG). The tract at residues 1–25 (MLIPRRVKHRKQHHPGRSGQATGGT) is disordered.

The protein belongs to the universal ribosomal protein uL16 family. In terms of assembly, part of the 50S ribosomal subunit.

Its function is as follows. Binds 23S rRNA and is also seen to make contacts with the A and possibly P site tRNAs. This is Large ribosomal subunit protein uL16 from Renibacterium salmoninarum (strain ATCC 33209 / DSM 20767 / JCM 11484 / NBRC 15589 / NCIMB 2235).